The chain runs to 947 residues: Ionotropic receptor 25a (947 aa).

Positions 1-30 (MILMNPKTSKILWLLGFLSLLSSFSLEIAA) are cleaved as a signal peptide. The Extracellular portion of the chain corresponds to 31 to 562 (QTTQNINVLF…SLFKFLTVLE (532 aa)). 4 N-linked (GlcNAc...) asparagine glycosylation sites follow: N78, N177, N277, and N434. A helical transmembrane segment spans residues 563 to 583 (TNVWLCILAAYFFTSFLMWIF). Residues 584–641 (DRWSPYSYQNNREKYKDDEEKREFNLKECLWFCMTSLTPQGGGEAPKNLSGRLVAATW) are Cytoplasmic-facing. Residues 642-662 (WLFGFIIIASYTANLAAFLTV) traverse the membrane as a helical segment. The Extracellular portion of the chain corresponds to 663–858 (SRLDTPVESL…DQSDGISIQN (196 aa)). N-linked (GlcNAc...) asparagine glycans are attached at residues N687, N715, and N762. A helical transmembrane segment spans residues 859 to 879 (IGGVFIVIFVGIGMACITLVF). The Cytoplasmic portion of the chain corresponds to 880 to 947 (EYWWYRYRKN…QYPATFKPRF (68 aa)).

The protein belongs to the glutamate-gated ion channel (TC 1.A.10.1) family. Interacts with nocte. As to expression, in the antenna, detected in neurons of the arista and also detected in sacculus neurons which innervate the first and second chambers (at protein level). Throughout the main body of the antenna, expressed in neurons which innervate the coeloconic class of olfactory sensilla (at protein level). Expressed in multiple cells of the dorsal organ including the dorsal organ cool cells (at protein level). Detected in femur and retina. Expressed in a subset of femur chordonotal neurons and antennal Johnston's Organ neurons.

It is found in the cell membrane. It localises to the cell projection. The protein resides in the axon. Its subcellular location is the dendrite. The protein localises to the perikaryon. It is found in the cilium. In terms of biological role, integral part of various neural sensory systems in the antenna that provide the neural basis for the response to environmental changes in temperature (thermosensation), humidity (hygrosensation) and odor detection. Required for odor-evoked electrophysiological responses in multiple neuron classes in the antenna and is likely to function as part of an olfactory receptor complex with Ir76a and Ir76b. Together with Ir21a and Ir93a, mediates the response of the larval dorsal organ cool cells, a trio of cool-responsive neurons, to cooling and is required for cool avoidance behavior. Required in chordonotal organ neurons for behavioral synchronization to low-amplitude temperature cycles and mediates circadian clock resetting by temperature. Together with Ir40a and Ir93a, mediates the response of the hydrosensory sacculus neurons to changes in relative humidity, and is required for dry detection and humidiy preference behavior. This chain is Ionotropic receptor 25a, found in Drosophila melanogaster (Fruit fly).